A 303-amino-acid polypeptide reads, in one-letter code: Glycine--tRNA ligase alpha subunit (303 aa).

This sequence belongs to the class-II aminoacyl-tRNA synthetase family. As to quaternary structure, tetramer of two alpha and two beta subunits.

Its subcellular location is the cytoplasm. The enzyme catalyses tRNA(Gly) + glycine + ATP = glycyl-tRNA(Gly) + AMP + diphosphate. This is Glycine--tRNA ligase alpha subunit from Methylobacterium radiotolerans (strain ATCC 27329 / DSM 1819 / JCM 2831 / NBRC 15690 / NCIMB 10815 / 0-1).